A 235-amino-acid chain; its full sequence is Glucosamine-6-phosphate deaminase (235 aa).

D62 serves as the catalytic Proton acceptor; for enolization step. The active-site For ring-opening step is N128. H130 serves as the catalytic Proton acceptor; for ring-opening step. Residue E135 is the For ring-opening step of the active site.

It belongs to the glucosamine/galactosamine-6-phosphate isomerase family. NagB subfamily.

It carries out the reaction alpha-D-glucosamine 6-phosphate + H2O = beta-D-fructose 6-phosphate + NH4(+). The protein operates within amino-sugar metabolism; N-acetylneuraminate degradation; D-fructose 6-phosphate from N-acetylneuraminate: step 5/5. Catalyzes the reversible isomerization-deamination of glucosamine 6-phosphate (GlcN6P) to form fructose 6-phosphate (Fru6P) and ammonium ion. This chain is Glucosamine-6-phosphate deaminase, found in Streptococcus pneumoniae (strain JJA).